Here is a 146-residue protein sequence, read N- to C-terminus: Probable transporter XF_0765 (146 aa).

The next 4 helical transmembrane spans lie at 9–29 (FTVALAAGLLFGFGLALSEMI), 46–66 (NPSLLFVLGSALAVAFPGMAL), 91–111 (IVFGSAIFGTGWGLTGLCPGP), and 116–136 (LSTGLGPVLLFVAAMAAGMII).

It belongs to the TsuA/YedE (TC 9.B.102) family.

The protein resides in the cell inner membrane. The sequence is that of Probable transporter XF_0765 from Xylella fastidiosa (strain 9a5c).